Consider the following 154-residue polypeptide: 6,7-dimethyl-8-ribityllumazine synthase (154 aa).

5-amino-6-(D-ribitylamino)uracil-binding positions include F22, 56-58, and 80-82; these read AFE and TVI. (2S)-2-hydroxy-3-oxobutyl phosphate is bound at residue 85-86; the sequence is ST. The active-site Proton donor is the H88. F113 is a binding site for 5-amino-6-(D-ribitylamino)uracil. R127 lines the (2S)-2-hydroxy-3-oxobutyl phosphate pocket.

This sequence belongs to the DMRL synthase family.

It catalyses the reaction (2S)-2-hydroxy-3-oxobutyl phosphate + 5-amino-6-(D-ribitylamino)uracil = 6,7-dimethyl-8-(1-D-ribityl)lumazine + phosphate + 2 H2O + H(+). It participates in cofactor biosynthesis; riboflavin biosynthesis; riboflavin from 2-hydroxy-3-oxobutyl phosphate and 5-amino-6-(D-ribitylamino)uracil: step 1/2. Catalyzes the formation of 6,7-dimethyl-8-ribityllumazine by condensation of 5-amino-6-(D-ribitylamino)uracil with 3,4-dihydroxy-2-butanone 4-phosphate. This is the penultimate step in the biosynthesis of riboflavin. This chain is 6,7-dimethyl-8-ribityllumazine synthase, found in Lactococcus lactis subsp. cremoris (strain MG1363).